The sequence spans 311 residues: tRNA-cytidine(32) 2-sulfurtransferase (311 aa).

Positions 47–52 match the PP-loop motif motif; the sequence is SGGKDS. [4Fe-4S] cluster is bound by residues C122, C125, and C213.

It belongs to the TtcA family. As to quaternary structure, homodimer. The cofactor is Mg(2+). Requires [4Fe-4S] cluster as cofactor.

The protein localises to the cytoplasm. It catalyses the reaction cytidine(32) in tRNA + S-sulfanyl-L-cysteinyl-[cysteine desulfurase] + AH2 + ATP = 2-thiocytidine(32) in tRNA + L-cysteinyl-[cysteine desulfurase] + A + AMP + diphosphate + H(+). Its pathway is tRNA modification. Catalyzes the ATP-dependent 2-thiolation of cytidine in position 32 of tRNA, to form 2-thiocytidine (s(2)C32). The sulfur atoms are provided by the cysteine/cysteine desulfurase (IscS) system. The chain is tRNA-cytidine(32) 2-sulfurtransferase from Escherichia coli (strain SMS-3-5 / SECEC).